A 326-amino-acid chain; its full sequence is Alkanal monooxygenase beta chain (326 aa).

It belongs to the bacterial luciferase oxidoreductase family. Heterodimer of an alpha and a beta chain.

The catalysed reaction is a long-chain fatty aldehyde + FMNH2 + O2 = a long-chain fatty acid + hnu + FMN + H2O + 2 H(+). Light-emitting reaction in luminous bacteria. The specific role of the beta subunit is unknown, but it is absolutely required for bioluminescence activity. This is Alkanal monooxygenase beta chain (luxB) from Photobacterium leiognathi.